Here is a 95-residue protein sequence, read N- to C-terminus: Pancreatic polypeptide prohormone (95 aa).

The signal sequence occupies residues 1–29 (MAAARLCLSLLLLSTCVALLLQPLLGAQG). The residue at position 65 (Y65) is a Tyrosine amide. The propeptide occupies 89–95 (ELSPLDL).

The protein belongs to the NPY family.

The protein resides in the secreted. In terms of biological role, hormone secreted by pancreatic cells that acts as a regulator of pancreatic and gastrointestinal functions probably by signaling through the G protein-coupled receptor NPY4R2. This is Pancreatic polypeptide prohormone from Homo sapiens (Human).